A 45-amino-acid polypeptide reads, in one-letter code: uncharacterized protein (45 aa).

Residues 5 to 25 (IFFIFALSGILAACTVGGGVS) form a helical membrane-spanning segment.

It localises to the membrane. This is an uncharacterized protein from Haemophilus influenzae (strain ATCC 51907 / DSM 11121 / KW20 / Rd).